The chain runs to 395 residues: Phosphoglycerate kinase (395 aa).

Substrate contacts are provided by residues 21–23, arginine 36, 59–62, arginine 113, and arginine 146; these read DLN and HLGR. ATP contacts are provided by residues lysine 197, glutamate 324, and 350-353; that span reads GGDT.

It belongs to the phosphoglycerate kinase family. As to quaternary structure, monomer.

It is found in the cytoplasm. The catalysed reaction is (2R)-3-phosphoglycerate + ATP = (2R)-3-phospho-glyceroyl phosphate + ADP. Its pathway is carbohydrate degradation; glycolysis; pyruvate from D-glyceraldehyde 3-phosphate: step 2/5. This chain is Phosphoglycerate kinase, found in Acinetobacter baylyi (strain ATCC 33305 / BD413 / ADP1).